The sequence spans 489 residues: Rhamnulokinase (489 aa).

Position 13 to 17 (13 to 17 (ASSGR)) interacts with ATP. A disulfide bridge links Cys68 with Cys222. Residues Gly83 and 236–238 (HDT) each bind substrate. Asp237 serves as the catalytic Proton acceptor. Thr259 contacts ATP. A substrate-binding site is contributed by Asn296. Gln304 serves as a coordination point for ATP. The cysteines at positions 353 and 370 are disulfide-linked. Gly402 lines the ATP pocket. Residues Cys413 and Cys417 are joined by a disulfide bond.

This sequence belongs to the rhamnulokinase family. Monomer. It depends on Mg(2+) as a cofactor.

It carries out the reaction L-rhamnulose + ATP = L-rhamnulose 1-phosphate + ADP + H(+). The protein operates within carbohydrate degradation; L-rhamnose degradation; glycerone phosphate from L-rhamnose: step 2/3. In terms of biological role, involved in the catabolism of L-rhamnose (6-deoxy-L-mannose). Catalyzes the transfer of the gamma-phosphate group from ATP to the 1-hydroxyl group of L-rhamnulose to yield L-rhamnulose 1-phosphate. This is Rhamnulokinase from Escherichia coli (strain K12 / DH10B).